The primary structure comprises 200 residues: Dephospho-CoA kinase (200 aa).

A DPCK domain is found at 3–200 (VLGLTGSIGM…LSGKPAAATR (198 aa)). Position 11-16 (11-16 (GMGKTT)) interacts with ATP.

The protein belongs to the CoaE family.

It localises to the cytoplasm. It catalyses the reaction 3'-dephospho-CoA + ATP = ADP + CoA + H(+). It participates in cofactor biosynthesis; coenzyme A biosynthesis; CoA from (R)-pantothenate: step 5/5. Catalyzes the phosphorylation of the 3'-hydroxyl group of dephosphocoenzyme A to form coenzyme A. The protein is Dephospho-CoA kinase of Brucella abortus (strain 2308).